Reading from the N-terminus, the 499-residue chain is Probable dipeptidase B (499 aa).

Cysteine 26 is a catalytic residue.

The protein belongs to the peptidase C69 family.

The catalysed reaction is an L-aminoacyl-L-amino acid + H2O = 2 an L-alpha-amino acid. The sequence is that of Probable dipeptidase B (pepDB) from Streptococcus pyogenes serotype M6 (strain ATCC BAA-946 / MGAS10394).